Here is a 313-residue protein sequence, read N- to C-terminus: Formimidoylglutamase (313 aa).

Residues His130, Asp155, His157, Asp159, Asp241, and Asp243 each coordinate Mn(2+).

It belongs to the arginase family. The cofactor is Mn(2+).

It carries out the reaction N-formimidoyl-L-glutamate + H2O = formamide + L-glutamate. It participates in amino-acid degradation; L-histidine degradation into L-glutamate; L-glutamate from N-formimidoyl-L-glutamate (hydrolase route): step 1/1. In terms of biological role, catalyzes the conversion of N-formimidoyl-L-glutamate to L-glutamate and formamide. In Salmonella newport (strain SL254), this protein is Formimidoylglutamase.